The following is a 293-amino-acid chain: Fructose-bisphosphate aldolase (293 aa).

Residue serine 50 coordinates D-glyceraldehyde 3-phosphate. Catalysis depends on aspartate 85, which acts as the Proton donor. Zn(2+) is bound by residues histidine 86, aspartate 106, glutamate 136, and histidine 178. Glycine 179 is a binding site for dihydroxyacetone phosphate. Residue histidine 208 coordinates Zn(2+). Dihydroxyacetone phosphate contacts are provided by residues 209–211 (GGS) and 230–233 (NVNT).

This sequence belongs to the class II fructose-bisphosphate aldolase family. The cofactor is Zn(2+).

It catalyses the reaction beta-D-fructose 1,6-bisphosphate = D-glyceraldehyde 3-phosphate + dihydroxyacetone phosphate. It functions in the pathway carbohydrate degradation; glycolysis; D-glyceraldehyde 3-phosphate and glycerone phosphate from D-glucose: step 4/4. Functionally, catalyzes the aldol condensation of dihydroxyacetone phosphate (DHAP or glycerone-phosphate) with glyceraldehyde 3-phosphate (G3P) to form fructose 1,6-bisphosphate (FBP) in gluconeogenesis and the reverse reaction in glycolysis. The chain is Fructose-bisphosphate aldolase (fba) from Streptococcus pyogenes serotype M1.